We begin with the raw amino-acid sequence, 510 residues long: Maturase K (510 aa).

It belongs to the intron maturase 2 family. MatK subfamily.

Its subcellular location is the plastid. The protein localises to the chloroplast. Usually encoded in the trnK tRNA gene intron. Probably assists in splicing its own and other chloroplast group II introns. This is Maturase K from Cestrum elegans (Red cestrum).